The following is a 421-amino-acid chain: Proton extrusion protein PxcA (421 aa).

The disordered stretch occupies residues 124–153; it reads PTVHSSNPDDSQLMTSKNNSKPVPDPESDD. Polar residues predominate over residues 125–144; the sequence is TVHSSNPDDSQLMTSKNNSK. The next 4 membrane-spanning stretches (helical) occupy residues 203–223, 298–318, 345–365, and 381–401; these read FVLL…SFIV, AIKN…LLIS, IIIL…WEVI, and FIFL…KYWI.

It belongs to the CemA family.

Its subcellular location is the cell inner membrane. In terms of biological role, required for H(+) efflux immediately after light irradiation to form a rapid H(+) concentration gradient across the thylakoid membranes. Together with PxcL, contributes to transient H(+) uptake following dark to light transition. The protein is Proton extrusion protein PxcA of Synechococcus sp. (strain ATCC 27144 / PCC 6301 / SAUG 1402/1) (Anacystis nidulans).